Consider the following 520-residue polypeptide: Ribonuclease Y (520 aa).

Residues methionine 1–serine 21 form a helical membrane-spanning segment. In terms of domain architecture, KH spans cysteine 210–aspartate 276. The 94-residue stretch at leucine 336 to alanine 429 folds into the HD domain.

It belongs to the RNase Y family.

It localises to the cell membrane. Endoribonuclease that initiates mRNA decay. The sequence is that of Ribonuclease Y from Flavobacterium psychrophilum (strain ATCC 49511 / DSM 21280 / CIP 103535 / JIP02/86).